Here is a 225-residue protein sequence, read N- to C-terminus: Golgi to ER traffic protein 1 (225 aa).

M1 is a topological domain (lumenal). The chain crosses the membrane as a helical span at residues 2–21; the sequence is NWVIIAALFFVIINKLLQYT. Topologically, residues 22 to 107 are cytoplasmic; it reads SRYQEAWINK…SQSKLFNRLK (86 aa). Residues 37 to 104 are a coiled coil; it reads DISSLSKEYS…AKDSQSKLFN (68 aa). A helical membrane pass occupies residues 108–128; that stretch reads LLTLTLPFMILKLWKGKFIVY. Over 129–172 the chain is Lumenal; it reads DIPTKDTFPVIVNGVLSQGLLYIPLLPINFLRGIDPNKHILVPG. The helical transmembrane segment at 173-189 threads the bilayer; sequence VSLGIWLMALTKTIDTV. Residues 190–225 are Cytoplasmic-facing; the sequence is EFIVKQLVFQPVVSKQVKEKTKEKVVELKTTEAELD.

Belongs to the WRB/GET1 family. In terms of assembly, component of the Golgi to ER traffic (GET) complex, which is composed of GET1, GET2 and GET3. Within the complex, GET1 and GET2 form a heterotetramer which is stabilized by phosphatidylinositol binding and which binds to the GET3 homodimer.

It localises to the endoplasmic reticulum membrane. The protein localises to the golgi apparatus membrane. Required for the post-translational delivery of tail-anchored (TA) proteins to the endoplasmic reticulum. Together with GET2, acts as a membrane receptor for soluble GET3, which recognizes and selectively binds the transmembrane domain of TA proteins in the cytosol. The GET complex cooperates with the HDEL receptor ERD2 to mediate the ATP-dependent retrieval of resident ER proteins that contain a C-terminal H-D-E-L retention signal from the Golgi to the ER. In Vanderwaltozyma polyspora (strain ATCC 22028 / DSM 70294 / BCRC 21397 / CBS 2163 / NBRC 10782 / NRRL Y-8283 / UCD 57-17) (Kluyveromyces polysporus), this protein is Golgi to ER traffic protein 1.